The sequence spans 412 residues: Clamp protein VP6 (412 aa).

It belongs to the reoviridae clamp protein family. As to quaternary structure, interacts with capsid proteins VP3, VP5 and VP7.

The protein localises to the virion. Located at the interface of the incomplete T=13 outer capsid and the pseudo T=2 inner capsid, 120 VP6 subunits clamp and stabilizes the inner capsid shell. The chain is Clamp protein VP6 (S8) from Aquareovirus C (isolate Golden shiner/USA/GSRV/1977) (AQRV-C).